The primary structure comprises 269 residues: MTTISRYTVFGNPVAHSKSPQIHQQFALQEGVDIEYGRICADIGGFAQAVSIFFETGGCGANVTVPFKQEAFALADEYSERASAAGAVNTLILLENGKLRGDNTDGIGLSNDITQVKNIAIECKTILLLGAGGAVRGVIPVLKEHRPARIVIANRTHAKAEELARLFGIEAVPMADLNGGFDIIINGTSGSLSGQLPAVSPEIFRNCRLAYDMVYGDAAQAFLNFAQSNGAAEVSDGLGMLVGQAAASYSLWRGFTPDIRPVIEYMKAL.

Shikimate contacts are provided by residues 17-19 (SKS) and Thr64. The Proton acceptor role is filled by Lys68. NADP(+) is bound at residue Glu80. Asn89 and Asp105 together coordinate shikimate. Residues 130 to 134 (GAGGA), 154 to 159 (NRTHAK), and Met213 contribute to the NADP(+) site. Position 215 (Tyr215) interacts with shikimate. Gly237 is a binding site for NADP(+).

The protein belongs to the shikimate dehydrogenase family. As to quaternary structure, homodimer.

It carries out the reaction shikimate + NADP(+) = 3-dehydroshikimate + NADPH + H(+). It participates in metabolic intermediate biosynthesis; chorismate biosynthesis; chorismate from D-erythrose 4-phosphate and phosphoenolpyruvate: step 4/7. In terms of biological role, involved in the biosynthesis of the chorismate, which leads to the biosynthesis of aromatic amino acids. Catalyzes the reversible NADPH linked reduction of 3-dehydroshikimate (DHSA) to yield shikimate (SA). This is Shikimate dehydrogenase (NADP(+)) from Neisseria cinerea.